Consider the following 283-residue polypeptide: Phosphatidylglycerol--prolipoprotein diacylglyceryl transferase (283 aa).

7 helical membrane passes run 18–38, 62–82, 106–126, 136–156, 190–210, 218–238, and 252–272; these read LGGIEVHWYGLAYACAIVVAF, YFLWAELGIVLGARIGYVLIY, FIGIRGMSYHGGLVGFLIASY, LLIYLDLIAISLPLGYVFGRI, PSQLIEAFLEGVVVFLMVMWA, GLLIVVYGLGYSLMRFIAEFY, and LSMGQILSVFMVIVSLGILLY. R155 is an a 1,2-diacyl-sn-glycero-3-phospho-(1'-sn-glycerol) binding site.

The protein belongs to the Lgt family.

Its subcellular location is the cell inner membrane. It carries out the reaction L-cysteinyl-[prolipoprotein] + a 1,2-diacyl-sn-glycero-3-phospho-(1'-sn-glycerol) = an S-1,2-diacyl-sn-glyceryl-L-cysteinyl-[prolipoprotein] + sn-glycerol 1-phosphate + H(+). It participates in protein modification; lipoprotein biosynthesis (diacylglyceryl transfer). In terms of biological role, catalyzes the transfer of the diacylglyceryl group from phosphatidylglycerol to the sulfhydryl group of the N-terminal cysteine of a prolipoprotein, the first step in the formation of mature lipoproteins. The polypeptide is Phosphatidylglycerol--prolipoprotein diacylglyceryl transferase (Helicobacter pylori (strain J99 / ATCC 700824) (Campylobacter pylori J99)).